We begin with the raw amino-acid sequence, 86 residues long: Sodium channel neurotoxin MeuNaTxalpha-4 (86 aa).

Residues 1–19 (MNYLILISFALLVITGVES) form the signal peptide. Positions 21–85 (RDAYIAKPHN…VPIRIPGKCH (65 aa)) constitute an LCN-type CS-alpha/beta domain. 4 disulfides stabilise this stretch: cysteine 31–cysteine 84, cysteine 35–cysteine 57, cysteine 43–cysteine 67, and cysteine 47–cysteine 69. Arginine 86 is a propeptide (removed by a carboxypeptidase).

It belongs to the long (4 C-C) scorpion toxin superfamily. Sodium channel inhibitor family. Alpha subfamily. Expressed by the venom gland.

Its subcellular location is the secreted. Its function is as follows. Alpha toxins bind voltage-independently at site-3 of sodium channels (Nav) and inhibit the inactivation of the activated channels, thereby blocking neuronal transmission. This toxin inhibits inactivation of drosophila DmNav1 (EC(50)=130 nM). This Mesobuthus eupeus (Lesser Asian scorpion) protein is Sodium channel neurotoxin MeuNaTxalpha-4.